Reading from the N-terminus, the 119-residue chain is NADH-quinone oxidoreductase subunit A (119 aa).

A run of 3 helical transmembrane segments spans residues 7 to 27, 63 to 83, and 88 to 108; these read FPVL…MFLG, LIAI…PWGV, and IGWL…VGFV.

Belongs to the complex I subunit 3 family. NDH-1 is composed of 14 different subunits. Subunits NuoA, H, J, K, L, M, N constitute the membrane sector of the complex.

The protein resides in the cell inner membrane. The enzyme catalyses a quinone + NADH + 5 H(+)(in) = a quinol + NAD(+) + 4 H(+)(out). Functionally, NDH-1 shuttles electrons from NADH, via FMN and iron-sulfur (Fe-S) centers, to quinones in the respiratory chain. The immediate electron acceptor for the enzyme in this species is believed to be ubiquinone. Couples the redox reaction to proton translocation (for every two electrons transferred, four hydrogen ions are translocated across the cytoplasmic membrane), and thus conserves the redox energy in a proton gradient. The sequence is that of NADH-quinone oxidoreductase subunit A from Polynucleobacter necessarius subsp. necessarius (strain STIR1).